The following is a 340-amino-acid chain: UDP-N-acetylenolpyruvoylglucosamine reductase (340 aa).

The region spanning 14–185 (HVEATARWLL…VAVEFNLPLL (172 aa)) is the FAD-binding PCMH-type domain. R162 is a catalytic residue. S235 (proton donor) is an active-site residue. Residue E332 is part of the active site.

Belongs to the MurB family. Requires FAD as cofactor.

It is found in the cytoplasm. The catalysed reaction is UDP-N-acetyl-alpha-D-muramate + NADP(+) = UDP-N-acetyl-3-O-(1-carboxyvinyl)-alpha-D-glucosamine + NADPH + H(+). The protein operates within cell wall biogenesis; peptidoglycan biosynthesis. Its function is as follows. Cell wall formation. This chain is UDP-N-acetylenolpyruvoylglucosamine reductase, found in Xanthomonas oryzae pv. oryzae (strain KACC10331 / KXO85).